The primary structure comprises 1692 residues: Regulating synaptic membrane exocytosis protein 1 (1692 aa).

The tract at residues 1 to 26 (MSSAVGPRGPRPPTVPPPMQELPDLS) is disordered. Over residues 9 to 20 (GPRPPTVPPPMQ) the composition is skewed to pro residues. The RabBD domain maps to 22–182 (LPDLSHLTEE…TKSGAWFFGS (161 aa)). Residues 110–170 (KDDAPTCGIC…VCNLCRKQQE (61 aa)) form an FYVE-type zinc finger. Zn(2+) is bound by residues cysteine 116, cysteine 119, cysteine 132, cysteine 135, cysteine 140, cysteine 143, cysteine 162, and cysteine 165. Positions 183–199 (GPQQTSQDGTLSDTATG) are enriched in polar residues. The segment at 183 to 555 (GPQQTSQDGT…CEDVELESES (373 aa)) is disordered. Residues 204–217 (VPREKKARLQERSR) show a composition bias toward basic and acidic residues. The segment covering 223–234 (STAAASSQDAAP) has biased composition (low complexity). Over residues 305–357 (VEERERKERRESRRLEKGRSQDYPDTPEKRDEGKAADEEKQRKEEDYQTRYRS) the composition is skewed to basic and acidic residues. The segment covering 377 to 388 (MHARVSRARHER) has biased composition (basic residues). The span at 412–430 (RAPAAARASPPDSPRAYSA) shows a compositional bias: low complexity. Over residues 462–475 (PELKAQEPLRKQSR) the composition is skewed to basic and acidic residues. Residues 497 to 509 (RNDSLSSDQSESV) show a composition bias toward polar residues. A Phosphoserine modification is found at serine 500. Residues 515-527 (KPHRSKRGGKKRQ) show a composition bias toward basic residues. A compositionally biased stretch (acidic residues) spans 545-555 (SCEDVELESES). Serine 578 carries the phosphoserine modification. The 87-residue stretch at 605–691 (RTTMPKDSGA…EPQVEIIVSR (87 aa)) folds into the PDZ domain. Residues 698 to 732 (RIPESSHPPLESSSSSFESQKMERPSISVISPTSP) are disordered. Residues 700–716 (PESSHPPLESSSSSFES) are compositionally biased toward low complexity. Residues serine 728 and serine 731 each carry the phosphoserine modification. Residues 742 to 865 (LPGQLSVKLW…ALLDDEPHWY (124 aa)) form the C2 1 domain. The disordered stretch occupies residues 870-1013 (HDESSLPLPQ…RTRDVDSQYL (144 aa)). Serine 881 bears the Phosphoserine mark. Over residues 935 to 944 (STTLTVPEQQ) the composition is skewed to polar residues. Position 977 is a phosphoserine (serine 977). Over residues 992–1009 (RHHDASRSPVDHRTRDVD) the composition is skewed to basic and acidic residues. At serine 1031 the chain carries Phosphoserine. Disordered regions lie at residues 1118 to 1222 (NCLR…EHSS) and 1235 to 1278 (GGSA…PVRS). Basic and acidic residues-rich tracts occupy residues 1128–1144 (SPERERGRWSPSLDRRR) and 1157–1170 (PENDRHSRKSERSS). Serine 1252 carries the phosphoserine modification. The segment covering 1252–1265 (SPTQSPPADTSFSS) has biased composition (polar residues). Position 1254 is a phosphothreonine (threonine 1254). A phosphoserine mark is found at serine 1256, serine 1308, serine 1310, serine 1311, serine 1339, serine 1340, and serine 1342. Disordered stretches follow at residues 1332–1394 (CDNV…SGRS), 1408–1428 (LEHNDGSQSDTAVGTVGAGGK), and 1445–1495 (RSRS…GSIN). A compositionally biased stretch (low complexity) spans 1345–1366 (SDVSAISRTSSASRLSSTSFMS). A Phosphoserine modification is found at serine 1416. Residues 1477–1490 (EMRKMVRQPSREST) are compositionally biased toward basic and acidic residues. The C2 2 domain occupies 1538 to 1656 (AMGDIQIGME…DLSSMVIGWY (119 aa)). 4 positions are modified to phosphoserine: serine 1677, serine 1680, serine 1683, and serine 1692.

As to quaternary structure, binds RAB3A, RAB3B and RAB3D that have been activated by GTP-binding. Interacts with RAB3C, RAB10, RAB26 and RAB37. Binds UNC13A. Interacts with TSPOAP1 and RIMBP2. Interacts with PPFIA3 and PPFIA4. Interacts with ERC1. Binds SNAP25, SYT1 and CACNA1B. Interaction with SYT1 is enhanced by calcium ions. Interaction with SNAP25 is weaker in the presence of calcium ions. Post-translationally, phosphorylated by BRSK1. In terms of tissue distribution, expressed in melanocytes. Detected in brain and retina.

It is found in the cell membrane. The protein resides in the synapse. It localises to the presynaptic cell membrane. Rab effector involved in exocytosis. May act as scaffold protein that regulates neurotransmitter release at the active zone. Essential for maintaining normal probability of neurotransmitter release and for regulating release during short-term synaptic plasticity. Plays a role in dendrite formation by melanocytes. The sequence is that of Regulating synaptic membrane exocytosis protein 1 (RIMS1) from Homo sapiens (Human).